A 77-amino-acid chain; its full sequence is Translation initiation factor IF-1, chloroplastic (77 aa).

The S1-like domain occupies methionine 1 to arginine 71.

It belongs to the IF-1 family. As to quaternary structure, component of the 30S ribosomal translation pre-initiation complex which assembles on the 30S ribosome in the order IF-2 and IF-3, IF-1 and N-formylmethionyl-tRNA(fMet); mRNA recruitment can occur at any time during PIC assembly.

Its subcellular location is the plastid. It localises to the chloroplast. Functionally, one of the essential components for the initiation of protein synthesis. Stabilizes the binding of IF-2 and IF-3 on the 30S subunit to which N-formylmethionyl-tRNA(fMet) subsequently binds. Helps modulate mRNA selection, yielding the 30S pre-initiation complex (PIC). Upon addition of the 50S ribosomal subunit IF-1, IF-2 and IF-3 are released leaving the mature 70S translation initiation complex. This Daucus carota (Wild carrot) protein is Translation initiation factor IF-1, chloroplastic.